The primary structure comprises 355 residues: UDP-3-O-acylglucosamine N-acyltransferase (355 aa).

His252 acts as the Proton acceptor in catalysis.

Belongs to the transferase hexapeptide repeat family. LpxD subfamily. Homotrimer.

It carries out the reaction a UDP-3-O-[(3R)-3-hydroxyacyl]-alpha-D-glucosamine + a (3R)-hydroxyacyl-[ACP] = a UDP-2-N,3-O-bis[(3R)-3-hydroxyacyl]-alpha-D-glucosamine + holo-[ACP] + H(+). It participates in bacterial outer membrane biogenesis; LPS lipid A biosynthesis. In terms of biological role, catalyzes the N-acylation of UDP-3-O-acylglucosamine using 3-hydroxyacyl-ACP as the acyl donor. Is involved in the biosynthesis of lipid A, a phosphorylated glycolipid that anchors the lipopolysaccharide to the outer membrane of the cell. The polypeptide is UDP-3-O-acylglucosamine N-acyltransferase (Polynucleobacter asymbioticus (strain DSM 18221 / CIP 109841 / QLW-P1DMWA-1) (Polynucleobacter necessarius subsp. asymbioticus)).